The following is a 102-amino-acid chain: Flagellar hook-basal body complex protein FliE (102 aa).

Belongs to the FliE family.

Its subcellular location is the bacterial flagellum basal body. This Oceanobacillus iheyensis (strain DSM 14371 / CIP 107618 / JCM 11309 / KCTC 3954 / HTE831) protein is Flagellar hook-basal body complex protein FliE.